Here is a 112-residue protein sequence, read N- to C-terminus: Divalent-cation tolerance protein CutA (112 aa).

Residues Cys16, His83, and His84 each coordinate Cu cation.

Belongs to the CutA family. As to quaternary structure, homotrimer. Requires Cu cation as cofactor.

The protein resides in the cytoplasm. Its function is as follows. Involved in resistance toward heavy metals. The protein is Divalent-cation tolerance protein CutA of Escherichia coli O81 (strain ED1a).